We begin with the raw amino-acid sequence, 635 residues long: tRNA uridine 5-carboxymethylaminomethyl modification enzyme MnmG (635 aa).

19 to 24 (GAGHAG) lines the FAD pocket. NAD(+) is bound at residue 280–294 (GPRYCPSIEDKIVRF).

This sequence belongs to the MnmG family. In terms of assembly, homodimer. Heterotetramer of two MnmE and two MnmG subunits. FAD serves as cofactor.

Its subcellular location is the cytoplasm. Functionally, NAD-binding protein involved in the addition of a carboxymethylaminomethyl (cmnm) group at the wobble position (U34) of certain tRNAs, forming tRNA-cmnm(5)s(2)U34. This chain is tRNA uridine 5-carboxymethylaminomethyl modification enzyme MnmG, found in Synechocystis sp. (strain ATCC 27184 / PCC 6803 / Kazusa).